The chain runs to 1728 residues: Hybrid PKS-NRPS synthetase TAS1 (1728 aa).

The condensation (C) domain stretch occupies residues serine 153–valine 499. Residues lysine 608–asparagine 1002 are adenylation (A) domain. The Carrier domain occupies methionine 1141 to valine 1219. Serine 1177 carries the post-translational modification O-(pantetheine 4'-phosphoryl)serine. A disordered region spans residues leucine 1225 to valine 1256. Composition is skewed to low complexity over residues glycine 1226–serine 1237 and glutamate 1244–serine 1255. The Ketosynthase family 3 (KS3) domain occupies arginine 1262 to threonine 1714. Active-site for beta-ketoacyl synthase activity residues include cysteine 1436, histidine 1579, and asparagine 1633.

It in the N-terminal section; belongs to the NRP synthetase family. Pantetheine 4'-phosphate is required as a cofactor.

It catalyses the reaction acetoacetyl-CoA + L-isoleucine + ATP = tenuazonic acid + AMP + diphosphate + CoA + 2 H(+). Functionally, hybrid PKS-NRPS synthetase that mediates the biosynthesis of the toxin tenuazonic acid (TeA), an inhibitor of protein biosynthesis on ribosomes by suppressing the release of new protein. TAS1 alone is sufficient for TeA synthesis via the condensation of isoleucine (Ile) with acetoacetyl-CoA by the N-terminal NRPS module and subsequent cyclization conducted by the C-terminal KS domain. The chain is Hybrid PKS-NRPS synthetase TAS1 from Pyricularia oryzae (strain 70-15 / ATCC MYA-4617 / FGSC 8958) (Rice blast fungus).